A 201-amino-acid chain; its full sequence is 3-isopropylmalate dehydratase small subunit (201 aa).

It belongs to the LeuD family. LeuD type 1 subfamily. As to quaternary structure, heterodimer of LeuC and LeuD.

The catalysed reaction is (2R,3S)-3-isopropylmalate = (2S)-2-isopropylmalate. It participates in amino-acid biosynthesis; L-leucine biosynthesis; L-leucine from 3-methyl-2-oxobutanoate: step 2/4. Catalyzes the isomerization between 2-isopropylmalate and 3-isopropylmalate, via the formation of 2-isopropylmaleate. In Cronobacter sakazakii (strain ATCC BAA-894) (Enterobacter sakazakii), this protein is 3-isopropylmalate dehydratase small subunit.